We begin with the raw amino-acid sequence, 240 residues long: Pyridoxine 5'-phosphate synthase (240 aa).

Residue asparagine 7 participates in 3-amino-2-oxopropyl phosphate binding. 9 to 10 is a 1-deoxy-D-xylulose 5-phosphate binding site; it reads DH. Arginine 18 contacts 3-amino-2-oxopropyl phosphate. The active-site Proton acceptor is the histidine 43. Positions 45 and 50 each coordinate 1-deoxy-D-xylulose 5-phosphate. Glutamate 70 serves as the catalytic Proton acceptor. Position 100 (threonine 100) interacts with 1-deoxy-D-xylulose 5-phosphate. The active-site Proton donor is histidine 191. Residues glycine 192 and 213–214 each bind 3-amino-2-oxopropyl phosphate; that span reads GH.

It belongs to the PNP synthase family. In terms of assembly, homooctamer; tetramer of dimers.

It localises to the cytoplasm. The enzyme catalyses 3-amino-2-oxopropyl phosphate + 1-deoxy-D-xylulose 5-phosphate = pyridoxine 5'-phosphate + phosphate + 2 H2O + H(+). Its pathway is cofactor biosynthesis; pyridoxine 5'-phosphate biosynthesis; pyridoxine 5'-phosphate from D-erythrose 4-phosphate: step 5/5. Functionally, catalyzes the complicated ring closure reaction between the two acyclic compounds 1-deoxy-D-xylulose-5-phosphate (DXP) and 3-amino-2-oxopropyl phosphate (1-amino-acetone-3-phosphate or AAP) to form pyridoxine 5'-phosphate (PNP) and inorganic phosphate. The chain is Pyridoxine 5'-phosphate synthase from Gloeothece citriformis (strain PCC 7424) (Cyanothece sp. (strain PCC 7424)).